The chain runs to 341 residues: MPQYKLSEIAKLLNLTLQGDDIEVVGVNTLQDASPNEISFLANAKYIHQLVLSQAGAIILSKEYASRVPRALISTEPYRDFGRVLSLFSIPQGCFDGISHQAYIHPTAQVSKTATIYPFVFIGSHTVIEENTTLFPGVYIGEHCHIGKNCTIYPNTVLMANTSIGNDCIIHAGVVLGSDGFGFALTEEKQKIPQVGNVIIKDKVEIGANTTVDRGTLGTTTINENTKIDNLVQIGHGVTVGKNTVIVSQVGISGSTSIGDNCILAGQAGISGHLTIGNNVTIGPQSGIGKNIPDNQILGGSPAVDRQTFLKTSVLMPRFPELFKRIKKLEKILEKKKEHNI.

The active-site Proton acceptor is H236.

This sequence belongs to the transferase hexapeptide repeat family. LpxD subfamily. Homotrimer.

It catalyses the reaction a UDP-3-O-[(3R)-3-hydroxyacyl]-alpha-D-glucosamine + a (3R)-hydroxyacyl-[ACP] = a UDP-2-N,3-O-bis[(3R)-3-hydroxyacyl]-alpha-D-glucosamine + holo-[ACP] + H(+). Its pathway is bacterial outer membrane biogenesis; LPS lipid A biosynthesis. Its function is as follows. Catalyzes the N-acylation of UDP-3-O-acylglucosamine using 3-hydroxyacyl-ACP as the acyl donor. Is involved in the biosynthesis of lipid A, a phosphorylated glycolipid that anchors the lipopolysaccharide to the outer membrane of the cell. The chain is UDP-3-O-acylglucosamine N-acyltransferase from Lawsonia intracellularis (strain PHE/MN1-00).